The chain runs to 264 residues: Phosphatidylglycerol--prolipoprotein diacylglyceryl transferase (264 aa).

The next 7 membrane-spanning stretches (helical) occupy residues 14–34 (IIFS…LIGF), 60–80 (LIYT…VFFY), 98–118 (GGMS…WVSF), 128–148 (ADFI…GNFI), 176–196 (SQLY…NWFI), 203–223 (GSVA…VEYV), and 240–260 (GQLL…WAYS). Residue arginine 143 participates in a 1,2-diacyl-sn-glycero-3-phospho-(1'-sn-glycerol) binding.

Belongs to the Lgt family.

It is found in the cell inner membrane. The enzyme catalyses L-cysteinyl-[prolipoprotein] + a 1,2-diacyl-sn-glycero-3-phospho-(1'-sn-glycerol) = an S-1,2-diacyl-sn-glyceryl-L-cysteinyl-[prolipoprotein] + sn-glycerol 1-phosphate + H(+). The protein operates within protein modification; lipoprotein biosynthesis (diacylglyceryl transfer). In terms of biological role, catalyzes the transfer of the diacylglyceryl group from phosphatidylglycerol to the sulfhydryl group of the N-terminal cysteine of a prolipoprotein, the first step in the formation of mature lipoproteins. This chain is Phosphatidylglycerol--prolipoprotein diacylglyceryl transferase, found in Actinobacillus pleuropneumoniae serotype 7 (strain AP76).